The sequence spans 488 residues: ATP synthase subunit beta (488 aa).

ATP is bound at residue 164-171 (GGAGVGKT).

The protein belongs to the ATPase alpha/beta chains family. In terms of assembly, F-type ATPases have 2 components, CF(1) - the catalytic core - and CF(0) - the membrane proton channel. CF(1) has five subunits: alpha(3), beta(3), gamma(1), delta(1), epsilon(1). CF(0) has four main subunits: a(1), b(1), b'(1) and c(9-12).

Its subcellular location is the cellular thylakoid membrane. The enzyme catalyses ATP + H2O + 4 H(+)(in) = ADP + phosphate + 5 H(+)(out). Produces ATP from ADP in the presence of a proton gradient across the membrane. The catalytic sites are hosted primarily by the beta subunits. This is ATP synthase subunit beta from Prochlorococcus marinus (strain NATL1A).